A 615-amino-acid chain; its full sequence is Glutamine--fructose-6-phosphate aminotransferase [isomerizing] (615 aa).

Cysteine 2 functions as the Nucleophile; for GATase activity in the catalytic mechanism. The 219-residue stretch at 2–220 (CGIVGYVGPQ…QDQVVELRRD (219 aa)) folds into the Glutamine amidotransferase type-2 domain. 2 SIS domains span residues 287–427 (IPPG…VRGT) and 460–605 (LARS…VDQP). Lysine 610 acts as the For Fru-6P isomerization activity in catalysis.

As to quaternary structure, homodimer.

It is found in the cytoplasm. It catalyses the reaction D-fructose 6-phosphate + L-glutamine = D-glucosamine 6-phosphate + L-glutamate. In terms of biological role, catalyzes the first step in hexosamine metabolism, converting fructose-6P into glucosamine-6P using glutamine as a nitrogen source. In Streptomyces coelicolor (strain ATCC BAA-471 / A3(2) / M145), this protein is Glutamine--fructose-6-phosphate aminotransferase [isomerizing].